Here is a 57-residue protein sequence, read N- to C-terminus: Large ribosomal subunit protein bL32 (57 aa).

It belongs to the bacterial ribosomal protein bL32 family.

The protein is Large ribosomal subunit protein bL32 of Bacillus pumilus (strain SAFR-032).